Consider the following 124-residue polypeptide: Large ribosomal subunit protein bL12 (124 aa).

It belongs to the bacterial ribosomal protein bL12 family. In terms of assembly, homodimer. Part of the ribosomal stalk of the 50S ribosomal subunit. Forms a multimeric L10(L12)X complex, where L10 forms an elongated spine to which 2 to 4 L12 dimers bind in a sequential fashion. Binds GTP-bound translation factors.

Its function is as follows. Forms part of the ribosomal stalk which helps the ribosome interact with GTP-bound translation factors. Is thus essential for accurate translation. In Allorhizobium ampelinum (strain ATCC BAA-846 / DSM 112012 / S4) (Agrobacterium vitis (strain S4)), this protein is Large ribosomal subunit protein bL12.